Here is a 314-residue protein sequence, read N- to C-terminus: Homoserine O-acetyltransferase (314 aa).

Residue cysteine 142 is the Acyl-thioester intermediate of the active site. Residues lysine 163 and serine 192 each contribute to the substrate site. Histidine 235 functions as the Proton acceptor in the catalytic mechanism. Glutamate 237 is an active-site residue. Arginine 249 lines the substrate pocket.

It belongs to the MetA family.

It is found in the cytoplasm. The catalysed reaction is L-homoserine + acetyl-CoA = O-acetyl-L-homoserine + CoA. It participates in amino-acid biosynthesis; L-methionine biosynthesis via de novo pathway; O-acetyl-L-homoserine from L-homoserine: step 1/1. Transfers an acetyl group from acetyl-CoA to L-homoserine, forming acetyl-L-homoserine. The protein is Homoserine O-acetyltransferase of Streptococcus pneumoniae serotype 4 (strain ATCC BAA-334 / TIGR4).